Reading from the N-terminus, the 328-residue chain is Ketol-acid reductoisomerase (NADP(+)) (328 aa).

Positions 2-181 (AKIYRETDAD…GFTRVGVIET (180 aa)) constitute a KARI N-terminal Rossmann domain. NADP(+) contacts are provided by residues 25-28 (YGIQ), R48, S52, and 82-85 (DMVQ). Residue H107 is part of the active site. Residue G133 coordinates NADP(+). The 146-residue stretch at 182 to 327 (TFAEETETDL…EDLRRLMRSG (146 aa)) folds into the KARI C-terminal knotted domain. Residues D190, E194, E226, and E230 each contribute to the Mg(2+) site. S251 is a binding site for substrate.

It belongs to the ketol-acid reductoisomerase family. Mg(2+) serves as cofactor.

The enzyme catalyses (2R)-2,3-dihydroxy-3-methylbutanoate + NADP(+) = (2S)-2-acetolactate + NADPH + H(+). It catalyses the reaction (2R,3R)-2,3-dihydroxy-3-methylpentanoate + NADP(+) = (S)-2-ethyl-2-hydroxy-3-oxobutanoate + NADPH + H(+). It functions in the pathway amino-acid biosynthesis; L-isoleucine biosynthesis; L-isoleucine from 2-oxobutanoate: step 2/4. Its pathway is amino-acid biosynthesis; L-valine biosynthesis; L-valine from pyruvate: step 2/4. Its function is as follows. Involved in the biosynthesis of branched-chain amino acids (BCAA). Catalyzes an alkyl-migration followed by a ketol-acid reduction of (S)-2-acetolactate (S2AL) to yield (R)-2,3-dihydroxy-isovalerate. In the isomerase reaction, S2AL is rearranged via a Mg-dependent methyl migration to produce 3-hydroxy-3-methyl-2-ketobutyrate (HMKB). In the reductase reaction, this 2-ketoacid undergoes a metal-dependent reduction by NADPH to yield (R)-2,3-dihydroxy-isovalerate. This Caldivirga maquilingensis (strain ATCC 700844 / DSM 13496 / JCM 10307 / IC-167) protein is Ketol-acid reductoisomerase (NADP(+)).